Here is a 160-residue protein sequence, read N- to C-terminus: Glyoxalase domain-containing protein 5 (160 aa).

The region spanning 33-153 (RLDHLVLTVR…DHNLIEVSNY (121 aa)) is the VOC domain.

Belongs to the glyoxalase I family.

This chain is Glyoxalase domain-containing protein 5 (glod5), found in Xenopus laevis (African clawed frog).